The primary structure comprises 315 residues: MDLRQFLMCLSLCTAFALSKPTEKKDRVHHEPQLSDKVHNDAQNFDYDHDAFLGAEEAKSFGQLTPEESKEKLGMIVDKIDTDKDGFVTEGELKSRIKHAQKKYIYDNVENQWQEFDMNQDGLISWDEYRNVTYGTYLDDPDPDDGFNYKPIMVRDERRFKMADQDGDLIATKEEFTAFLHPEEYDYMKDIVLQETMEDIDQNADGFIDLEEYIGDMYSHDGNADEPQWVKTEREQFVEFRDKNRDGKMDKEETKDWILPSDYDHAEAEARHLVYESDQDKDGKLTKEEIVDKYDLFVGSQATDFGEALVRHDEF.

The N-terminal stretch at 1-19 (MDLRQFLMCLSLCTAFALS) is a signal peptide. Tyr-47 is subject to Phosphotyrosine. Residue Thr-65 is modified to Phosphothreonine. 6 consecutive EF-hand domains span residues 68-103 (ESKE…AQKK), 104-139 (YIYD…TYLD), 151-186 (PIMV…EEYD), 188-223 (MKDI…HDGN), 229-264 (WVKT…SDYD), and 265-300 (HAEA…FVGS). Ser-69 is modified (phosphoserine). Residues Asp-81, Asp-83, Asp-85, Glu-92, Asp-117, Asn-119, Asp-121, and Glu-128 each contribute to the Ca(2+) site. An N-linked (GlcNAc...) asparagine glycan is attached at Asn-131. Residues Asp-164, Asp-166, Asp-168, Glu-175, Asp-201, Asn-203, Asp-205, Glu-212, Asp-242, Asn-244, Asp-246, Lys-248, and Glu-253 each contribute to the Ca(2+) site. Phosphothreonine is present on Thr-254. A phosphoserine mark is found at Ser-261 and Ser-277. 5 residues coordinate Ca(2+): Asp-278, Asp-280, Asp-282, Lys-284, and Glu-289. Positions 312–315 (HDEF) match the Prevents secretion from ER motif.

It belongs to the CREC family. Binds crotoxin. Interacts with GGCX.

It localises to the endoplasmic reticulum membrane. The protein resides in the golgi apparatus. Its subcellular location is the secreted. It is found in the melanosome. The protein localises to the sarcoplasmic reticulum lumen. Functionally, involved in regulation of vitamin K-dependent carboxylation of multiple N-terminal glutamate residues. Seems to inhibit gamma-carboxylase GGCX. Binds 7 calcium ions with a low affinity. This Rattus norvegicus (Rat) protein is Calumenin (Calu).